A 470-amino-acid polypeptide reads, in one-letter code: 6-phosphofructo-2-kinase/fructose-2,6-bisphosphatase (470 aa).

The 6-phosphofructo-2-kinase stretch occupies residues 1 to 249 (MAAVASGQLT…VYYLMNTHVT (249 aa)). A Phosphoserine; by PKA modification is found at Ser-31. ATP is bound at residue 47 to 55 (GLRRPGKTY). Positions 80 and 104 each coordinate beta-D-fructose 6-phosphate. The active site involves Asp-130. The beta-D-fructose 6-phosphate site is built by Thr-132 and Arg-138. Cys-160 is an active-site residue. Residue 169-174 (NIKQVK) coordinates ATP. The beta-D-fructose 6-phosphate site is built by Lys-174, Arg-195, and Tyr-199. The interval 250–469 (PRAIYLSRHG…AEALVTVPEH (220 aa)) is fructose-2,6-bisphosphatase. Arg-257 lines the beta-D-fructose 2,6-bisphosphate pocket. The active-site Tele-phosphohistidine intermediate is His-258. 2 residues coordinate beta-D-fructose 2,6-bisphosphate: Asn-264 and Gly-270. Glu-327 (proton donor/acceptor) is an active-site residue. Residues Tyr-338, Arg-352, Lys-356, Tyr-367, Gln-393, and Arg-397 each contribute to the beta-D-fructose 2,6-bisphosphate site. Position 349-352 (349-352 (FALR)) interacts with ATP. Residues 393–397 (QAVMR) and Tyr-429 each bind ATP.

It in the C-terminal section; belongs to the phosphoglycerate mutase family. As to quaternary structure, homodimer. Liver.

The enzyme catalyses beta-D-fructose 2,6-bisphosphate + H2O = beta-D-fructose 6-phosphate + phosphate. The catalysed reaction is beta-D-fructose 6-phosphate + ATP = beta-D-fructose 2,6-bisphosphate + ADP + H(+). Its activity is regulated as follows. Phosphorylation results in inhibition of the kinase activity. Synthesis and degradation of fructose 2,6-bisphosphate. This is 6-phosphofructo-2-kinase/fructose-2,6-bisphosphatase from Gallus gallus (Chicken).